The sequence spans 431 residues: UPF0597 protein BVU_2091 (431 aa).

The protein belongs to the UPF0597 family.

The sequence is that of UPF0597 protein BVU_2091 from Phocaeicola vulgatus (strain ATCC 8482 / DSM 1447 / JCM 5826 / CCUG 4940 / NBRC 14291 / NCTC 11154) (Bacteroides vulgatus).